We begin with the raw amino-acid sequence, 68 residues long: Small ribosomal subunit protein bS21 (68 aa).

It belongs to the bacterial ribosomal protein bS21 family.

The protein is Small ribosomal subunit protein bS21 of Paracoccus denitrificans (strain Pd 1222).